Here is a 333-residue protein sequence, read N- to C-terminus: Electron transfer flavoprotein subunit alpha, mitochondrial (333 aa).

Residues M1–F19 constitute a mitochondrion transit peptide. The tract at residues Q20–L204 is domain I. K59 carries the post-translational modification N6-acetyllysine; alternate. N6-succinyllysine; alternate is present on K59. At K62 the chain carries N6-acetyllysine. N6-acetyllysine; alternate is present on K69. K69 is subject to N6-succinyllysine; alternate. K75 is modified (N6-acetyllysine). K85 bears the N6-acetyllysine; alternate mark. Position 85 is an N6-succinyllysine; alternate (K85). T93 carries the phosphothreonine modification. N6-acetyllysine occurs at positions 101 and 139. S140 is subject to Phosphoserine. K158 bears the N6-acetyllysine; alternate mark. N6-succinyllysine; alternate is present on K158. K164 carries the post-translational modification N6-acetyllysine. K187 carries the post-translational modification N6-succinyllysine. Residue K203 is modified to N6-acetyllysine; alternate. Position 203 is an N6-succinyllysine; alternate (K203). Residues T205 to K333 are domain II. The residue at position 216 (K216) is an N6-succinyllysine. R223 serves as a coordination point for FAD. N6-acetyllysine; alternate is present on residues K226 and K232. N6-succinyllysine; alternate occurs at positions 226 and 232. Residues S248, V263–T266, S281–H286, and N300 contribute to the FAD site. K301 is modified (N6-succinyllysine). D318–L319 provides a ligand contact to FAD.

This sequence belongs to the ETF alpha-subunit/FixB family. Heterodimer composed of ETFA and ETFB. Identified in a complex that contains ETFA, ETFB and ETFRF1. Interaction with ETFRF1 promotes dissociation of the bound FAD and loss of electron transfer activity. Interacts with TASOR. The cofactor is FAD.

Its subcellular location is the mitochondrion matrix. Heterodimeric electron transfer flavoprotein that accepts electrons from several mitochondrial dehydrogenases, including acyl-CoA dehydrogenases, glutaryl-CoA and sarcosine dehydrogenase. It transfers the electrons to the main mitochondrial respiratory chain via ETF-ubiquinone oxidoreductase (ETF dehydrogenase). Required for normal mitochondrial fatty acid oxidation and normal amino acid metabolism. This is Electron transfer flavoprotein subunit alpha, mitochondrial (Etfa) from Rattus norvegicus (Rat).